Consider the following 331-residue polypeptide: Tetraacyldisaccharide 4'-kinase (331 aa).

Thr-60–Thr-67 is an ATP binding site.

The protein belongs to the LpxK family.

The catalysed reaction is a lipid A disaccharide + ATP = a lipid IVA + ADP + H(+). It functions in the pathway glycolipid biosynthesis; lipid IV(A) biosynthesis; lipid IV(A) from (3R)-3-hydroxytetradecanoyl-[acyl-carrier-protein] and UDP-N-acetyl-alpha-D-glucosamine: step 6/6. In terms of biological role, transfers the gamma-phosphate of ATP to the 4'-position of a tetraacyldisaccharide 1-phosphate intermediate (termed DS-1-P) to form tetraacyldisaccharide 1,4'-bis-phosphate (lipid IVA). The polypeptide is Tetraacyldisaccharide 4'-kinase (Pseudomonas syringae pv. syringae (strain B728a)).